The primary structure comprises 98 residues: MSITTLNIMVAFMMALLGMFVYRSHLMSSLLCLEGMMLSLFMLATIVSLNMNFTISFMFPVILLVFAACEAAVGLALLIMVSNTYGMDYIHNLNLLQC.

3 consecutive transmembrane segments (helical) span residues 1-21, 29-49, and 61-81; these read MSIT…GMFV, SLLC…IVSL, and VILL…LIMV.

Belongs to the complex I subunit 4L family. In terms of assembly, core subunit of respiratory chain NADH dehydrogenase (Complex I) which is composed of 45 different subunits.

It is found in the mitochondrion inner membrane. It carries out the reaction a ubiquinone + NADH + 5 H(+)(in) = a ubiquinol + NAD(+) + 4 H(+)(out). Functionally, core subunit of the mitochondrial membrane respiratory chain NADH dehydrogenase (Complex I) which catalyzes electron transfer from NADH through the respiratory chain, using ubiquinone as an electron acceptor. Part of the enzyme membrane arm which is embedded in the lipid bilayer and involved in proton translocation. In Ochotona princeps (Southern American pika), this protein is NADH-ubiquinone oxidoreductase chain 4L (MT-ND4L).